The chain runs to 359 residues: 3-dehydroquinate synthase (359 aa).

Residues 70 to 75 (DAEGGK), 104 to 108 (GAATD), 128 to 129 (TT), Lys141, and Lys150 each bind NAD(+). Residues Glu183, His246, and His262 each contribute to the Zn(2+) site.

It belongs to the sugar phosphate cyclases superfamily. Dehydroquinate synthase family. Co(2+) is required as a cofactor. It depends on Zn(2+) as a cofactor. The cofactor is NAD(+).

It localises to the cytoplasm. It carries out the reaction 7-phospho-2-dehydro-3-deoxy-D-arabino-heptonate = 3-dehydroquinate + phosphate. Its pathway is metabolic intermediate biosynthesis; chorismate biosynthesis; chorismate from D-erythrose 4-phosphate and phosphoenolpyruvate: step 2/7. Catalyzes the conversion of 3-deoxy-D-arabino-heptulosonate 7-phosphate (DAHP) to dehydroquinate (DHQ). This is 3-dehydroquinate synthase from Mycolicibacterium gilvum (strain PYR-GCK) (Mycobacterium gilvum (strain PYR-GCK)).